Here is a 387-residue protein sequence, read N- to C-terminus: DNA-damage-repair/toleration protein 111 (387 aa).

The segment at 1 to 213 (MLGGLYGDLP…TSGLGVGAGG (213 aa)) is disordered. A compositionally biased stretch (low complexity) spans 19-29 (SGNSSSVWSSS). Basic and acidic residues predominate over residues 103–158 (DPARPNDYEEYKREKKRKATEAEMKREMDKRRQEDEERDKREREEREKERERDNSD). Positions 214–260 (QMTAAQRMMAKMGWKQGQGLGKSEQGITTPLMAKKTDRRAGVIVNAS) constitute a G-patch domain. Residues 283–369 (RVLLLRNMVG…RTVRATFYDE (87 aa)) form the RRM domain.

Component of the SWAP1-SFPS-RRC1 splicing factor complex which modulates pre-mRNA splicing to promote photomorphogenesis. Interacts with SWAP1 in a light-independent manner. Associates with the photoreceptor phytochrome B (phyB) in nuclear photobodies upon response to red light. Binds to the splicing factor 1 SF1, involved in 3' splicing site recognition. As to expression, expressed ubiquitously with highest levels in dry seeds and in cells surrounding the base of trichomes and guard cells.

The protein resides in the nucleus. It localises to the nucleus speckle. In terms of biological role, as a member of the SWAP1-SFPS-RRC1 splicing factor complex, modulates photomorphogenesis by regulating the gene expression and pre-messenger RNA (mRNA) alternative splicing of a large number of genes, including those involved in plant responses to light signaling, probably by helping in the 3' splice site determination. Associates with and regulates EARLY FLOWERING 3 (ELF3) mRNA processing, a key component of the circadian clock also involved in photomorphogenesis. Required for light-regulated (red, far-red and blue lights) photomorphogenesis in a PHYB- and PHYTOCHROME INTERACTING FACTORS- (PIFs) dependent manner. Promotes flowering under both short (SD) and long days (LD). Controls abscisic acid (ABA) sensitivity during seed development, stomatal responsiveness and germination by monitoring ABI3 splicing, upstream of the splicing factor SUPPRESSOR OF ABI3-ABI5. Seems to be involved in the resistance to UV light and chemical DNA-damaging agents. The protein is DNA-damage-repair/toleration protein 111 of Arabidopsis thaliana (Mouse-ear cress).